The chain runs to 930 residues: uncharacterized protein (930 aa).

The short motif at 434-441 (IRRGISRK) is the Nuclear localization signal element.

Its subcellular location is the nucleus. This is an uncharacterized protein from Chaetomium thermophilum (strain DSM 1495 / CBS 144.50 / IMI 039719) (Thermochaetoides thermophila).